A 239-amino-acid polypeptide reads, in one-letter code: Ribosomal RNA small subunit methyltransferase G (239 aa).

S-adenosyl-L-methionine-binding positions include Gly77, Phe82, 128-129 (AE), and Arg147.

The protein belongs to the methyltransferase superfamily. RNA methyltransferase RsmG family.

Its subcellular location is the cytoplasm. Functionally, specifically methylates the N7 position of guanine in position 535 of 16S rRNA. The polypeptide is Ribosomal RNA small subunit methyltransferase G (Bacillus cereus (strain AH187)).